Here is a 215-residue protein sequence, read N- to C-terminus: Cytochrome b6 (215 aa).

Residues 32-52 (IFYCLGGITLTCFLVQVATGF) form a helical membrane-spanning segment. Cys35 lines the heme c pocket. Heme b-binding residues include His86 and His100. 3 helical membrane passes run 90 to 110 (ASMM…TGGF), 116 to 136 (LTWV…VTGY), and 186 to 206 (LHTF…FPMI). The heme b site is built by His187 and His202.

Belongs to the cytochrome b family. PetB subfamily. The 4 large subunits of the cytochrome b6-f complex are cytochrome b6, subunit IV (17 kDa polypeptide, PetD), cytochrome f and the Rieske protein, while the 4 small subunits are PetG, PetL, PetM and PetN. The complex functions as a dimer. The cofactor is heme b. It depends on heme c as a cofactor.

The protein localises to the plastid. Its subcellular location is the chloroplast thylakoid membrane. Component of the cytochrome b6-f complex, which mediates electron transfer between photosystem II (PSII) and photosystem I (PSI), cyclic electron flow around PSI, and state transitions. This chain is Cytochrome b6, found in Cucumis sativus (Cucumber).